The sequence spans 625 residues: tRNA uridine 5-carboxymethylaminomethyl modification enzyme MnmG (625 aa).

FAD is bound by residues 9 to 14, V121, and S176; that span reads GGGHAG. 270 to 284 lines the NAD(+) pocket; it reads GPRYCPSIEDKIYRF. Q367 contributes to the FAD binding site.

Belongs to the MnmG family. Homodimer. Heterotetramer of two MnmE and two MnmG subunits. It depends on FAD as a cofactor.

It is found in the cytoplasm. NAD-binding protein involved in the addition of a carboxymethylaminomethyl (cmnm) group at the wobble position (U34) of certain tRNAs, forming tRNA-cmnm(5)s(2)U34. This chain is tRNA uridine 5-carboxymethylaminomethyl modification enzyme MnmG, found in Nitratiruptor sp. (strain SB155-2).